Reading from the N-terminus, the 1081-residue chain is MNTTPFHSDPPPSRIQRKLVVEVVEARNILPKDGQGSSSAYVVVDFDAQKKRTSTKFRDLNPIWNEMLDFAVSDPKNMDYDELDIEVYNDKRFGNGGGRKNHFLGRVKIYGSQFSRRGEEGLVYFPLEKKSVFSWIRGEIGLKIYYYDEAADEDTAGGGGGQQQQQQQQQFHPPQQEADEQQHQQQFHPPPQQMMNIPPEKPNVVVVEEGRVFESAQSQRYTETHQQPPVVIVEESPPQHVMQGPNDNHPHRNDNHPQRPPSPPPPPSAGEVHYYPPEVRKMQVGRPPGGDRIRVTKRPPNGDYSPRVINSKTGGGETTMEKKTHHPYNLVEPMQYLFVRIVKARGLPPNESAYVKVRTSNHFVRSKPAVNRPGESVDSPEWNQVFALGHNRSDSAVTGATLEISAWDASSESFLGGVCFDLSEVPVRDPPDSPLAPQWYRLEGSGADQNSGRISGDIQLSVWIGTQVDEAFPEAWSSDAPHVAHTRSKVYQSPKLWYLRVTVLEAQDLHIAPNLPPLTAPEIRVKAQLGFQSARTRRGSMNNHSGSFHWHEDMIFVAGEPLEDCLVLMVEDRTTKEATLLGHAMIPVSSIEQRIDERFVPSKWHTLEGEGGGGGGGGGPGGGGGGGPYCGRISLRLCLEGGYHVLEEAAHVCSDFRPTAKQLWKPPIGILELGILGARGLLPMKAKNGGKGSTDAYCVAKYGKKWVRTRTITDSFDPRWHEQYTWQVYDPCTVLTVGVFDNWRMFSDASDDRPDTRIGKIRIRVSTLESNKVYTNSYPLLVLLPSGMKKMGEIEVAVRFACPSLLPDVCAAYGQPLLPRMHYIRPLGVAQQDALRGAATKMVAAWLARAEPPLGPEVVRYMLDADSHAWSMRKSKANWYRIVGVLAWAVGLAKWLDNIRRWRNPVTTVLVHILYLVLVWYPDLVVPTAFLYVVMIGVWYYRFRPKIPAGMDIRLSQAETVDPDELDEEFDTIPSSRRPEVIRARYDRLRILAVRVQTILGDFAAQGERIQALVSWRDPRATKLFIAICLVITIVLYAVPAKMVAVALGFYYLRHPMFRDTMPTASLNFFRRLPSLSDRLI.

The C2 1 domain occupies 1–124; it reads MNTTPFHSDP…SRRGEEGLVY (124 aa). Disordered stretches follow at residues 154–198 and 238–323; these read DTAG…MNIP and PQHV…MEKK. Residues 163–176 are compositionally biased toward low complexity; it reads QQQQQQQQFHPPQQ. The span at 248 to 257 shows a compositional bias: basic and acidic residues; sequence NHPHRNDNHP. Over residues 258-268 the composition is skewed to pro residues; it reads QRPPSPPPPPS. C2 domains are found at residues 318-440, 477-605, and 652-778; these read TTME…PQWY, SSDA…SKWH, and VCSD…TNSY. Residues Glu-351, Ser-352, Asp-408, and Ser-413 each coordinate Ca(2+). The next 3 helical transmembrane spans lie at 879 to 899, 916 to 936, and 1024 to 1044; these read WYRI…LDNI, LVLV…VVMI, and LFIA…AKMV.

It belongs to the MCTP family. In terms of assembly, interacts with SUB/SCM and POQ at the plasma membrane. Binds to SUB/SCM at plasmodesmata (PD) in root epidermal cells to promote tissue morphogenesis. It depends on Ca(2+) as a cofactor. In terms of tissue distribution, observed mainly in flowers, and, to a lower extent, in seedlings, roots, shoots, leaves, stems and inflorescences. Expressed in the vascular tissues of roots, cotyledons and rosette leaves. Accumulates in roots meristems.

The protein resides in the cell membrane. Its subcellular location is the cytoplasm. It localises to the golgi apparatus membrane. It is found in the cell junction. The protein localises to the plasmodesma. Its function is as follows. May be involved in Ca 2(+)-dependent signaling and membrane trafficking. Plays a role in fruit dehiscence. Components of the machinery involved in organ development mediated by the receptor-like kinase STRUBBELIG (SUB). Collaboratively with SUB and POQ, regulates cell growth anisotropy during gynoecium development, thus linking together cell-cell communication and cellular growth. Together with SUB/SCM, links RLK-dependent signal transduction and intercellular communication mediated by plasmodesmata (PD) to regulate tissue morphogenesis. May function as a signaling molecule by regulating the trafficking of other regulators. This is Protein QUIRKY from Arabidopsis thaliana (Mouse-ear cress).